Reading from the N-terminus, the 159-residue chain is Large ribosomal subunit protein uL15 (159 aa).

The span at 1–11 (MKLNELRDNEG) shows a compositional bias: basic and acidic residues. The disordered stretch occupies residues 1–40 (MKLNELRDNEGARYQSKRLGRGIGSGKGKTSGKGVKGQTS). The segment covering 21–35 (RGIGSGKGKTSGKGV) has biased composition (gly residues).

This sequence belongs to the universal ribosomal protein uL15 family. As to quaternary structure, part of the 50S ribosomal subunit.

Binds to the 23S rRNA. The polypeptide is Large ribosomal subunit protein uL15 (Paramagnetospirillum magneticum (strain ATCC 700264 / AMB-1) (Magnetospirillum magneticum)).